Reading from the N-terminus, the 1212-residue chain is DNA-directed RNA polymerase subunit beta' (1212 aa).

Zn(2+) is bound by residues Cys60, Cys62, Cys75, and Cys78. 3 residues coordinate Mg(2+): Asp450, Asp452, and Asp454. Zn(2+) is bound by residues Cys819, Cys893, Cys900, and Cys903.

The protein belongs to the RNA polymerase beta' chain family. As to quaternary structure, the RNAP catalytic core consists of 2 alpha, 1 beta, 1 beta' and 1 omega subunit. When a sigma factor is associated with the core the holoenzyme is formed, which can initiate transcription. The cofactor is Mg(2+). It depends on Zn(2+) as a cofactor.

It catalyses the reaction RNA(n) + a ribonucleoside 5'-triphosphate = RNA(n+1) + diphosphate. In terms of biological role, DNA-dependent RNA polymerase catalyzes the transcription of DNA into RNA using the four ribonucleoside triphosphates as substrates. This chain is DNA-directed RNA polymerase subunit beta', found in Streptococcus thermophilus (strain ATCC BAA-491 / LMD-9).